Here is an 814-residue protein sequence, read N- to C-terminus: Probable G-protein coupled receptor 156 (814 aa).

Residues 1 to 47 (MEPEINCSELCDSFPGQELDRRPLHDLCKTTITSSHHSSKTISSLSP) lie on the Extracellular side of the membrane. A glycan (N-linked (GlcNAc...) asparagine) is linked at N6. A helical membrane pass occupies residues 48-68 (VLLGIVWTFLSCGLLLILFFL). Residues 69-86 (AFTIHCRKNRIVKMSSPN) lie on the Cytoplasmic side of the membrane. A helical membrane pass occupies residues 87 to 107 (LNIVTLLGSCLTYSSAYLFGI). The Extracellular portion of the chain corresponds to 108-118 (QDVLVGSSMET). The helical transmembrane segment at 119–139 (LIQTRLSMLCIGTSLVFGPIL) threads the bilayer. Over 140–164 (GKSWRLYKVFTQRVPDKRVIIKDLQ) the chain is Cytoplasmic. The chain crosses the membrane as a helical span at residues 165–185 (LLGLVAALLMADVILLMTWVL). The Extracellular portion of the chain corresponds to 186–222 (TDPIQCLQILSVSMTVTGKDVSCTSTSTHFCASRYSD). Residues 223 to 243 (VWIALIWGCKGLLLLYGAYLA) traverse the membrane as a helical segment. Residues 244 to 257 (GLTGHVSSPPVNQS) lie on the Cytoplasmic side of the membrane. A helical membrane pass occupies residues 258–278 (LTIMVGVNLLVLAAGLLFVVT). Over 279–288 (RYLHSWPNLV) the chain is Extracellular. Residues 289-309 (FGLTSGGIFVCTTTINCFIFI) traverse the membrane as a helical segment. Topologically, residues 310–814 (PQLKQWKAFE…FKDDLKPTLV (505 aa)) are cytoplasmic. Positions 354 to 390 (EKSSMERLLTEKNAVIESLQEQVNNAKEKIVRLMSAE) form a coiled coil. Disordered regions lie at residues 422–545 (AQGP…SSVI), 557–724 (GLGP…PEQW), and 769–792 (SSSD…LASW). Residues 443–454 (SQCTSGPSSYAQ) are compositionally biased toward polar residues. Positions 468-484 (GKEEKISDSKDFSDHLD) are enriched in basic and acidic residues. Over residues 486-496 (GCSQKPWTEQS) the composition is skewed to polar residues. Positions 523–545 (QRQRHLENSEEPPERRSRVSSVI) are enriched in basic and acidic residues. A compositionally biased stretch (polar residues) spans 563–581 (SLSTAPSCHQQTWKNSAAF). Residues 599-610 (VRRRRAAQRARS) are compositionally biased toward basic residues. The segment covering 639-651 (NGDSPSLAPQTTD) has biased composition (polar residues). Low complexity predominate over residues 769–780 (SSSDSSDSGTSD).

This sequence belongs to the G-protein coupled receptor 3 family. GABA-B receptor subfamily. Ubiquitous expression both in the CNS and in peripheral tissues. Very high expression in fetal brain and testis relative to expression in other tissues.

It is found in the cell membrane. Functionally, orphan G-protein coupled receptor involved in the regulation of hair cell orientation in mechanosensory organs of the inner ear. It is required to trigger a 180 degree reversal in hair cell orientation, creating a virtual line of polarity reversal (LPR) across which stereociliary bundles are arranged in opposite orientations. This chain is Probable G-protein coupled receptor 156 (GPR156), found in Homo sapiens (Human).